The following is a 657-amino-acid chain: Threonine--tRNA ligase (657 aa).

Residues 1 to 70 form the TGS domain; it reads MSDHKESTGA…NSDAAIEIIT (70 aa). Residues 253–555 are catalytic; it reads DHRKLGAELE…LIEHTAGNFP (303 aa). 3 residues coordinate Zn(2+): Cys351, His402, and His532.

It belongs to the class-II aminoacyl-tRNA synthetase family. In terms of assembly, homodimer. Requires Zn(2+) as cofactor.

Its subcellular location is the cytoplasm. It catalyses the reaction tRNA(Thr) + L-threonine + ATP = L-threonyl-tRNA(Thr) + AMP + diphosphate + H(+). Functionally, catalyzes the attachment of threonine to tRNA(Thr) in a two-step reaction: L-threonine is first activated by ATP to form Thr-AMP and then transferred to the acceptor end of tRNA(Thr). Also edits incorrectly charged L-seryl-tRNA(Thr). This chain is Threonine--tRNA ligase, found in Chlorobium chlorochromatii (strain CaD3).